The following is a 636-amino-acid chain: Sodium-dependent multivitamin transporter (636 aa).

Helical transmembrane passes span 24-44 (FSLV…AIGL), 68-88 (CLPV…ILGV), 101-121 (FLGC…IPVF), 143-163 (ICGT…VLYA), 176-196 (LWLS…LGGL), 199-219 (VIWT…AVII), 256-276 (FWTL…VNQA), 297-317 (VFPC…VMFA), 336-356 (FVLY…GLFV), 404-424 (FGYG…GPVL), 428-448 (ISIF…GMFF), and 456-476 (AIVG…GSIV). 2 N-linked (GlcNAc...) asparagine glycosylation sites follow: N489 and N498. A helical transmembrane segment spans residues 528–548 (LWYSAHNSTTVIVVGLIVSLL). The interval 606-627 (LRASGDKEPMTEASPVHQGTSP) is disordered.

The protein belongs to the sodium:solute symporter (SSF) (TC 2.A.21) family. As to quaternary structure, interacts with PDZD11.

Its subcellular location is the cell membrane. The protein localises to the apical cell membrane. It catalyses the reaction biotin(out) + 2 Na(+)(out) = biotin(in) + 2 Na(+)(in). It carries out the reaction (R)-pantothenate(out) + 2 Na(+)(out) = (R)-pantothenate(in) + 2 Na(+)(in). The enzyme catalyses (R)-lipoate(out) + 2 Na(+)(out) = (R)-lipoate(in) + 2 Na(+)(in). The catalysed reaction is iodide(out) + 2 Na(+)(out) = iodide(in) + 2 Na(+)(in). In terms of biological role, sodium-dependent multivitamin transporter that mediates the electrogenic transport of pantothenate, biotin, lipoate and iodide. Functions as a Na(+)-coupled substrate symporter where the stoichiometry of Na(+):substrate is 2:1, creating an electrochemical Na(+) gradient used as driving force for substrate uptake. Required for biotin and pantothenate uptake in the intestine across the brush border membrane. Plays a role in the maintenance of intestinal mucosa integrity, by providing the gut mucosa with biotin. Contributes to the luminal uptake of biotin and pantothenate into the brain across the blood-brain barrier. The polypeptide is Sodium-dependent multivitamin transporter (SLC5A6) (Oryctolagus cuniculus (Rabbit)).